We begin with the raw amino-acid sequence, 556 residues long: Phosphomethylpyrimidine synthase (556 aa).

Substrate contacts are provided by residues N191, M220, Y249, H285, 305-307 (SRG), 346-349 (DALR), and E385. A Zn(2+)-binding site is contributed by H389. A substrate-binding site is contributed by Y412. H453 provides a ligand contact to Zn(2+). Residues C535, C538, and C543 each contribute to the [4Fe-4S] cluster site.

The protein belongs to the ThiC family. It depends on [4Fe-4S] cluster as a cofactor.

It carries out the reaction 5-amino-1-(5-phospho-beta-D-ribosyl)imidazole + S-adenosyl-L-methionine = 4-amino-2-methyl-5-(phosphooxymethyl)pyrimidine + CO + 5'-deoxyadenosine + formate + L-methionine + 3 H(+). Its pathway is cofactor biosynthesis; thiamine diphosphate biosynthesis. Catalyzes the synthesis of the hydroxymethylpyrimidine phosphate (HMP-P) moiety of thiamine from aminoimidazole ribotide (AIR) in a radical S-adenosyl-L-methionine (SAM)-dependent reaction. This chain is Phosphomethylpyrimidine synthase, found in Chlorobaculum tepidum (strain ATCC 49652 / DSM 12025 / NBRC 103806 / TLS) (Chlorobium tepidum).